Here is a 632-residue protein sequence, read N- to C-terminus: Arginine--tRNA ligase (632 aa).

Residues 129–139 (ANPVHPLHVGS) carry the 'HIGH' region motif.

Belongs to the class-I aminoacyl-tRNA synthetase family.

It localises to the cytoplasm. It catalyses the reaction tRNA(Arg) + L-arginine + ATP = L-arginyl-tRNA(Arg) + AMP + diphosphate. This is Arginine--tRNA ligase from Korarchaeum cryptofilum (strain OPF8).